A 129-amino-acid polypeptide reads, in one-letter code: Small ribosomal subunit protein uS11 (129 aa).

The protein belongs to the universal ribosomal protein uS11 family. Part of the 30S ribosomal subunit. Interacts with proteins S7 and S18. Binds to IF-3.

Its function is as follows. Located on the platform of the 30S subunit, it bridges several disparate RNA helices of the 16S rRNA. Forms part of the Shine-Dalgarno cleft in the 70S ribosome. The protein is Small ribosomal subunit protein uS11 of Histophilus somni (strain 129Pt) (Haemophilus somnus).